Here is a 475-residue protein sequence, read N- to C-terminus: Ankyrin repeat, SAM and basic leucine zipper domain-containing protein 1 (475 aa).

Positions Met1–Trp25 are disordered. Ser17, Ser18, and Ser20 each carry phosphoserine. ANK repeat units follow at residues Glu45 to Ser74, Tyr78 to Phe107, Asp110 to Val144, Arg148 to Thr177, Asn181 to Leu210, and Asp214 to Gly243. One can recognise an SAM domain in the interval Ser272–Gln334.

Interacts with DDX4, PIWIL1, RANBP9 and TDRD1.

It localises to the cytoplasm. Plays a central role during spermatogenesis by repressing transposable elements and preventing their mobilization, which is essential for the germline integrity. Acts via the piRNA metabolic process, which mediates the repression of transposable elements during meiosis by forming complexes composed of piRNAs and Piwi proteins and governs the methylation and subsequent repression of transposons. Its association with pi-bodies suggests a participation in the primary piRNAs metabolic process. Required prior to the pachytene stage to facilitate the production of multiple types of piRNAs, including those associated with repeats involved in the regulation of retrotransposons. May act by mediating protein-protein interactions during germ cell maturation. This chain is Ankyrin repeat, SAM and basic leucine zipper domain-containing protein 1 (ASZ1), found in Chlorocebus aethiops (Green monkey).